The sequence spans 385 residues: Lipid-A-disaccharide synthase (385 aa).

Belongs to the LpxB family.

The catalysed reaction is a lipid X + a UDP-2-N,3-O-bis[(3R)-3-hydroxyacyl]-alpha-D-glucosamine = a lipid A disaccharide + UDP + H(+). It functions in the pathway bacterial outer membrane biogenesis; LPS lipid A biosynthesis. Condensation of UDP-2,3-diacylglucosamine and 2,3-diacylglucosamine-1-phosphate to form lipid A disaccharide, a precursor of lipid A, a phosphorylated glycolipid that anchors the lipopolysaccharide to the outer membrane of the cell. The sequence is that of Lipid-A-disaccharide synthase from Pseudoalteromonas translucida (strain TAC 125).